Reading from the N-terminus, the 630-residue chain is Adagio-like protein 3 (630 aa).

In terms of domain architecture, PAS spans 54–126 (EDEAAAWEGR…PLVDPMVVSE (73 aa)). Cys102 is subject to S-4a-FMN cysteine. The region spanning 220-268 (YCCILQLSDEVLAHNILSRLSPRDVASIGSVCTRMHELTKNDHLRKMVC) is the F-box domain. Kelch repeat units follow at residues 380-430 (SWLV…CTLD), 432-483 (SKLV…SVFG), 485-537 (TKLF…RLDH), 545-597 (GRII…CVVG), and 599-629 (TRVLVLGGHTGEEWILNELHELCLASRPDED).

This sequence belongs to the ADAGIO family. In terms of processing, FMN binds covalently to cysteine after exposure to blue light and is reversed in the dark.

The protein resides in the nucleus. The protein operates within protein modification; protein ubiquitination. Functionally, component of an E3 ubiquitin ligase complex that plays a central role in blue light-dependent circadian cycles. Acts as a blue light photoreceptor, due to the presence of FMN, that mediates light-regulated protein degradation of critical clock components by targeting them to the proteasome complex. The SCF(ADO3) E3 ubiquitin ligase complex is involved in the regulation of circadian clock-dependent processes including transition to flowering time, hypocotyl elongation, cotyledons and leaf movement rhythms. In Oryza sativa subsp. japonica (Rice), this protein is Adagio-like protein 3.